The sequence spans 255 residues: Ribonuclease HII (255 aa).

An RNase H type-2 domain is found at 72 to 255 (RLIAGVDEVG…KTFAPVQSFR (184 aa)). Asp78, Glu79, and Asp170 together coordinate a divalent metal cation.

The protein belongs to the RNase HII family. Mn(2+) serves as cofactor. Requires Mg(2+) as cofactor.

Its subcellular location is the cytoplasm. The enzyme catalyses Endonucleolytic cleavage to 5'-phosphomonoester.. In terms of biological role, endonuclease that specifically degrades the RNA of RNA-DNA hybrids. The protein is Ribonuclease HII (rnhB) of Bacillus subtilis (strain 168).